The primary structure comprises 540 residues: Eukaryotic translation initiation factor 3 subunit L (540 aa).

In terms of domain architecture, PCI spans 307 to 515; the sequence is TFSDILLYIQ…IHIADTKVSH (209 aa).

The protein belongs to the eIF-3 subunit L family. As to quaternary structure, component of the eukaryotic translation initiation factor 3 (eIF-3) complex. The eIF-3 complex interacts with pix.

The protein resides in the cytoplasm. Component of the eukaryotic translation initiation factor 3 (eIF-3) complex, which is involved in protein synthesis of a specialized repertoire of mRNAs and, together with other initiation factors, stimulates binding of mRNA and methionyl-tRNAi to the 40S ribosome. The eIF-3 complex specifically targets and initiates translation of a subset of mRNAs involved in cell proliferation. In Drosophila grimshawi (Hawaiian fruit fly), this protein is Eukaryotic translation initiation factor 3 subunit L.